The sequence spans 558 residues: N-acetylglucosamine-6-O-sulfatase (558 aa).

Ser101 is modified (3-oxoalanine (Ser)).

It belongs to the sulfatase family. Post-translationally, the conversion to 3-oxoalanine (also known as C-formylglycine, FGly), of a serine or cysteine residue in prokaryotes and of a cysteine residue in eukaryotes, is critical for catalytic activity.

In terms of biological role, exosulfatase involved in the degradation of the glycosaminoglycan (GAG) heparan sulfate (HS). Catalyzes the hydrolysis of the 6-sulfate groups of the N-acetyl-D-glucosamine 6-sulfate units. GAG-specific sulfatases play a key role in the persistence of the major human gut symbiont B.thetaiotaomicron in the host gastrointestinal tract. The chain is N-acetylglucosamine-6-O-sulfatase from Bacteroides thetaiotaomicron (strain ATCC 29148 / DSM 2079 / JCM 5827 / CCUG 10774 / NCTC 10582 / VPI-5482 / E50).